An 84-amino-acid chain; its full sequence is Cell division topological specificity factor (84 aa).

It belongs to the MinE family.

Prevents the cell division inhibition by proteins MinC and MinD at internal division sites while permitting inhibition at polar sites. This ensures cell division at the proper site by restricting the formation of a division septum at the midpoint of the long axis of the cell. This chain is Cell division topological specificity factor, found in Cupriavidus necator (strain ATCC 17699 / DSM 428 / KCTC 22496 / NCIMB 10442 / H16 / Stanier 337) (Ralstonia eutropha).